A 180-amino-acid chain; its full sequence is Large ribosomal subunit protein uL5 (180 aa).

Belongs to the universal ribosomal protein uL5 family. As to quaternary structure, part of the 50S ribosomal subunit; part of the 5S rRNA/L5/L18/L25 subcomplex. Contacts the 5S rRNA and the P site tRNA. Forms a bridge to the 30S subunit in the 70S ribosome.

This is one of the proteins that bind and probably mediate the attachment of the 5S RNA into the large ribosomal subunit, where it forms part of the central protuberance. In the 70S ribosome it contacts protein S13 of the 30S subunit (bridge B1b), connecting the 2 subunits; this bridge is implicated in subunit movement. Contacts the P site tRNA; the 5S rRNA and some of its associated proteins might help stabilize positioning of ribosome-bound tRNAs. This is Large ribosomal subunit protein uL5 from Lactobacillus helveticus (strain DPC 4571).